We begin with the raw amino-acid sequence, 117 residues long: uncharacterized protein (117 aa).

Residues 57–77 (LGFPLGLLVFLHSLIVARFFV) form a helical membrane-spanning segment.

It is found in the membrane. This is an uncharacterized protein from Schizosaccharomyces pombe (strain 972 / ATCC 24843) (Fission yeast).